The primary structure comprises 286 residues: Nucleoid occlusion protein (286 aa).

The segment at residues 147–166 (EALAQRLGKNQSTVANKLRL) is a DNA-binding region (H-T-H motif).

The protein belongs to the ParB family.

The protein localises to the cytoplasm. Its subcellular location is the nucleoid. Its function is as follows. Effects nucleoid occlusion by binding relatively nonspecifically to DNA and preventing the assembly of the division machinery in the vicinity of the nucleoid, especially under conditions that disturb the cell cycle. It helps to coordinate cell division and chromosome segregation by preventing the formation of the Z ring through the nucleoid, which would cause chromosome breakage. This chain is Nucleoid occlusion protein, found in Oceanobacillus iheyensis (strain DSM 14371 / CIP 107618 / JCM 11309 / KCTC 3954 / HTE831).